Reading from the N-terminus, the 490-residue chain is Betaine aldehyde dehydrogenase (490 aa).

Positions 26, 27, and 93 each coordinate K(+). Glycine 150–tryptophan 152 is a binding site for NAD(+). Catalysis depends on lysine 162, which acts as the Charge relay system. Lysine 176 to glutamate 179 lines the NAD(+) pocket. Valine 180 is a binding site for K(+). Position 230-233 (glycine 230–threonine 233) interacts with NAD(+). Leucine 246 is a binding site for K(+). Glutamate 252 (proton acceptor) is an active-site residue. 3 residues coordinate NAD(+): glycine 254, cysteine 286, and glutamate 387. Residue cysteine 286 is the Nucleophile of the active site. Residue cysteine 286 is modified to Cysteine sulfenic acid (-SOH). The K(+) site is built by lysine 457 and glycine 460. The active-site Charge relay system is the glutamate 464.

Belongs to the aldehyde dehydrogenase family. As to quaternary structure, dimer of dimers. Requires K(+) as cofactor.

The enzyme catalyses betaine aldehyde + NAD(+) + H2O = glycine betaine + NADH + 2 H(+). It functions in the pathway amine and polyamine biosynthesis; betaine biosynthesis via choline pathway; betaine from betaine aldehyde: step 1/1. Involved in the biosynthesis of the osmoprotectant glycine betaine. Catalyzes the irreversible oxidation of betaine aldehyde to the corresponding acid. In Pseudomonas syringae pv. tomato (strain ATCC BAA-871 / DC3000), this protein is Betaine aldehyde dehydrogenase.